The following is a 524-amino-acid chain: Excitatory amino acid transporter 3 (524 aa).

Residues 1–18 (MGKPARKGCDWKRFLRNN) lie on the Cytoplasmic side of the membrane. Residues 19–38 (WLLLSTVVAVVLGIVIGVLV) traverse the membrane as a helical segment. Residues 39-61 (REYSKLSNLEKFYFSFPGEILMR) lie on the Extracellular side of the membrane. Residues 62-82 (MLKLVILPLIVSSMITGVATL) form a helical membrane-spanning segment. The Cytoplasmic portion of the chain corresponds to 83–93 (DSNVSGKIGLR). Residues 94–114 (AVVYYFCTTLIAVILGIVLVV) form a helical membrane-spanning segment. Positions 98, 101, and 102 each coordinate Na(+). Over 115 to 205 (SIKPGVTQKV…KTKEYKVVGM (91 aa)) the chain is Extracellular. Asparagine 178 and asparagine 195 each carry an N-linked (GlcNAc...) asparagine glycan. Residues 206–229 (YSDGINVLGLIVFCLVLGIVIGRK) form a helical membrane-spanning segment. At 230–238 (WEKGQILVD) the chain is on the cytoplasmic side. The chain crosses the membrane as a helical span at residues 239–266 (FFNALSDATMKIVQIIMCYMPIGILFLI). At 267–286 (AGKIIEVEDWEIFRKLGLYM) the chain is on the extracellular side. Residues 287-308 (ATVLSGLAIHSIVILPLIYFII) form a helical membrane-spanning segment. The Cytoplasmic segment spans residues 309 to 313 (VRKNP). Positions 314 to 344 (FQFAMGMAQALLTALMISSSSATLPVTFRCA) form an intramembrane region, discontinuously helical. L-aspartate contacts are provided by serine 331 and serine 333. Residues 345-353 (EEKNRVDKR) are Cytoplasmic-facing. A helical membrane pass occupies residues 354–380 (ITRFVLPVGATINMDGTALYEAVAAVF). Na(+) is bound by residues glycine 362, threonine 364, asparagine 366, and aspartate 368. Position 370 (threonine 370) interacts with L-aspartate. The Extracellular portion of the chain corresponds to 381-393 (IAQLNDLDLSVGQ). The segment at residues 394-427 (IITISVTATAASIGAAGVPQPGLVTMVIVLSAVG) is an intramembrane region (discontinuously helical). Residues serine 405, isoleucine 406, and alanine 408 each contribute to the Na(+) site. Residue valine 411 coordinates L-aspartate. At 428–440 (LPAEDVTLIIAVD) the chain is on the extracellular side. The chain crosses the membrane as a helical span at residues 441 to 462 (WLLDRFRTMVNVLGDAFGTGIV). The L-aspartate site is built by arginine 447, threonine 448, and asparagine 451. Na(+) is bound by residues asparagine 451 and aspartate 455. Residues 463-524 (EKLSKKELEQ…TISFTQTSQF (62 aa)) lie on the Cytoplasmic side of the membrane. A phosphoserine mark is found at serine 517 and serine 522.

Belongs to the dicarboxylate/amino acid:cation symporter (DAACS) (TC 2.A.23) family. SLC1A1 subfamily. As to quaternary structure, homotrimer. Interacts with ARL6IP5. Interacts with RTN2 (via N-terminus); the interaction promotes cell surface expression of SLC1A1. Interacts with SORCS2; this interaction is important for normal expression at the cell membrane.

It localises to the cell membrane. It is found in the apical cell membrane. The protein localises to the synapse. The protein resides in the synaptosome. Its subcellular location is the early endosome membrane. It localises to the late endosome membrane. It is found in the recycling endosome membrane. It carries out the reaction K(+)(in) + L-glutamate(out) + 3 Na(+)(out) + H(+)(out) = K(+)(out) + L-glutamate(in) + 3 Na(+)(in) + H(+)(in). The catalysed reaction is K(+)(in) + L-aspartate(out) + 3 Na(+)(out) + H(+)(out) = K(+)(out) + L-aspartate(in) + 3 Na(+)(in) + H(+)(in). The enzyme catalyses D-aspartate(out) + K(+)(in) + 3 Na(+)(out) + H(+)(out) = D-aspartate(in) + K(+)(out) + 3 Na(+)(in) + H(+)(in). It catalyses the reaction K(+)(in) + L-cysteine(out) + 3 Na(+)(out) + H(+)(out) = K(+)(out) + L-cysteine(in) + 3 Na(+)(in) + H(+)(in). Functionally, sodium-dependent, high-affinity amino acid transporter that mediates the uptake of L-glutamate and also L-aspartate and D-aspartate. Can also transport L-cysteine. Functions as a symporter that transports one amino acid molecule together with two or three Na(+) ions and one proton, in parallel with the counter-transport of one K(+) ion. Mediates Cl(-) flux that is not coupled to amino acid transport; this avoids the accumulation of negative charges due to aspartate and Na(+) symport. Plays an important role in L-glutamate and L-aspartate reabsorption in renal tubuli. Plays a redundant role in the rapid removal of released glutamate from the synaptic cleft, which is essential for terminating the postsynaptic action of glutamate. Contributes to glutathione biosynthesis and protection against oxidative stress via its role in L-glutamate and L-cysteine transport. Negatively regulated by ARL6IP5. The sequence is that of Excitatory amino acid transporter 3 (SLC1A1) from Bos taurus (Bovine).